Here is a 247-residue protein sequence, read N- to C-terminus: 2,3-bisphosphoglycerate-dependent phosphoglycerate mutase (247 aa).

Substrate is bound by residues 8–15, 21–22, Arg-60, 87–90, Lys-98, 114–115, and 183–184; these read RHGESTWN, TG, ERHY, RR, and GN. Residue His-9 is the Tele-phosphohistidine intermediate of the active site. Glu-87 (proton donor/acceptor) is an active-site residue.

It belongs to the phosphoglycerate mutase family. BPG-dependent PGAM subfamily. In terms of assembly, homodimer.

The catalysed reaction is (2R)-2-phosphoglycerate = (2R)-3-phosphoglycerate. Its pathway is carbohydrate degradation; glycolysis; pyruvate from D-glyceraldehyde 3-phosphate: step 3/5. In terms of biological role, catalyzes the interconversion of 2-phosphoglycerate and 3-phosphoglycerate. The protein is 2,3-bisphosphoglycerate-dependent phosphoglycerate mutase of Methylibium petroleiphilum (strain ATCC BAA-1232 / LMG 22953 / PM1).